A 60-amino-acid chain; its full sequence is Mastoparan-VT1 (60 aa).

The first 25 residues, 1–25 (MKNTILILFTAFIALLGFFGMSAEA), serve as a signal peptide directing secretion. A propeptide spanning residues 26–45 (LADLKADPLAGPNPDADPEA) is cleaved from the precursor. AXPX repeat units follow at residues 31–34 (ADPL), 35–38 (AGPN), and 41–44 (ADPE). Leucine amide is present on leucine 59.

Belongs to the MCD family. Mastoparan subfamily. In terms of tissue distribution, expressed by the venom gland.

Its subcellular location is the secreted. Functionally, antimicrobial peptide with activities against Gram-negative and Gram-positive bacteria and the fungi C.albicans and C.parapsilosis. Exhibits little hemolytic activity against washed human erythrocytes. Also acts as a mast cell degranulating peptide. Its mast cell degranulation activity may be related to the activation of G-protein coupled receptors in mast cells as well as interaction with other proteins located in cell endosomal membranes in the mast cells. Its function is as follows. Antimicrobial peptide with activities against Gram-negative and Gram-positive bacteria and the fungi C.albicans and C.parapsilosis. Exhibits little hemolytic activity against washed human erythrocytes. Also acts as a mast cell degranulating peptide. The sequence is that of Mastoparan-VT1 from Vespa tropica (Greater banded hornet).